Consider the following 91-residue polypeptide: MKKLVLLFALVLLAFQVQADSIQNTDEETKTEEQQGEEDQAVSVSFGDPQGSGLQDAALGWGRRCPRCPPCPRCSWCPRCPTCPRCNCNPK.

Positions M1–A19 are cleaved as a signal peptide. The propeptide occupies D20–C65. Residues I22–Q55 form a disordered region. 6 tandem repeats follow at residues C65–R67, C68–P70, C71–R73, C77–R79, C80–T82, and C83–R85. Positions C65–R85 are 6 X 3 AA tandem repeats of C-P-X.

This sequence belongs to the alpha-defensin family. In terms of tissue distribution, paneth cells of the small bowel.

The protein localises to the secreted. Apparent precursor of a secreted, cationic, proline- and cysteine-rich peptide that contains Cys-Pro-Xaa repeats. Unlike cryptdin, the proposed mature peptide region lacks the structural motif characteristic of defensins. It may have microbicidal activities. This Mus musculus (Mouse) protein is Alpha-defensin 31.